The chain runs to 63 residues: Alpha-conotoxin-like PuSG1.1 (63 aa).

The signal sequence occupies residues 1–21 (MRCLAFLVVTLLLFTATATTG). Residues 22–43 (ASNGMNAAASGEAPDSISLAVR) constitute a propeptide that is removed on maturation. 2 disulfide bridges follow: Cys-46–Cys-52 and Cys-47–Cys-60. The interval 48–50 (PDP) is lacks the Ser-Xaa-Pro motif that is crucial for potent interaction with nAChR.

It belongs to the conotoxin A superfamily. As to expression, expressed by the salivary gland.

The protein resides in the secreted. Alpha-conopeptides-like may act on postsynaptic membranes, they bind to the nicotinic acetylcholine receptors (nAChR) and thus inhibit them. Has possibly a distinct nAChR binding mode from other alpha-conotoxins, due to a different three residue motif (lacks the Ser-Xaa-Pro motif). The sequence is that of Alpha-conotoxin-like PuSG1.1 from Conus pulicarius (Flea-bitten cone).